The following is a 106-amino-acid chain: Nucleoid-associated protein RPA0616 (106 aa).

Belongs to the YbaB/EbfC family. As to quaternary structure, homodimer.

The protein resides in the cytoplasm. Its subcellular location is the nucleoid. Its function is as follows. Binds to DNA and alters its conformation. May be involved in regulation of gene expression, nucleoid organization and DNA protection. The sequence is that of Nucleoid-associated protein RPA0616 from Rhodopseudomonas palustris (strain ATCC BAA-98 / CGA009).